The primary structure comprises 83 residues: Small ribosomal subunit protein uS17 (83 aa).

Belongs to the universal ribosomal protein uS17 family. In terms of assembly, part of the 30S ribosomal subunit.

Its function is as follows. One of the primary rRNA binding proteins, it binds specifically to the 5'-end of 16S ribosomal RNA. The polypeptide is Small ribosomal subunit protein uS17 (Chlamydia muridarum (strain MoPn / Nigg)).